Here is a 259-residue protein sequence, read N- to C-terminus: Large ribosomal subunit protein eL8 (259 aa).

The tract at residues 1-24 is disordered; sequence MAPKSKKVAPSPFAQPKAAKTTKN. 2 positions are modified to phosphoserine: serine 11 and serine 33.

It belongs to the eukaryotic ribosomal protein eL8 family. Component of the large ribosomal subunit (LSU). Mature yeast ribosomes consist of a small (40S) and a large (60S) subunit. The 40S small subunit contains 1 molecule of ribosomal RNA (18S rRNA) and at least 33 different proteins. The large 60S subunit contains 3 rRNA molecules (25S, 5.8S and 5S rRNA) and at least 46 different proteins.

The protein localises to the cytoplasm. Component of the ribosome, a large ribonucleoprotein complex responsible for the synthesis of proteins in the cell. The small ribosomal subunit (SSU) binds messenger RNAs (mRNAs) and translates the encoded message by selecting cognate aminoacyl-transfer RNA (tRNA) molecules. The large subunit (LSU) contains the ribosomal catalytic site termed the peptidyl transferase center (PTC), which catalyzes the formation of peptide bonds, thereby polymerizing the amino acids delivered by tRNAs into a polypeptide chain. The nascent polypeptides leave the ribosome through a tunnel in the LSU and interact with protein factors that function in enzymatic processing, targeting, and the membrane insertion of nascent chains at the exit of the ribosomal tunnel. The sequence is that of Large ribosomal subunit protein eL8 (rpl8) from Schizosaccharomyces pombe (strain 972 / ATCC 24843) (Fission yeast).